Consider the following 309-residue polypeptide: Methionyl-tRNA formyltransferase (309 aa).

109 to 112 (SLLP) contacts (6S)-5,6,7,8-tetrahydrofolate.

The protein belongs to the Fmt family.

It catalyses the reaction L-methionyl-tRNA(fMet) + (6R)-10-formyltetrahydrofolate = N-formyl-L-methionyl-tRNA(fMet) + (6S)-5,6,7,8-tetrahydrofolate + H(+). In terms of biological role, attaches a formyl group to the free amino group of methionyl-tRNA(fMet). The formyl group appears to play a dual role in the initiator identity of N-formylmethionyl-tRNA by promoting its recognition by IF2 and preventing the misappropriation of this tRNA by the elongation apparatus. This Chloroflexus aggregans (strain MD-66 / DSM 9485) protein is Methionyl-tRNA formyltransferase.